The sequence spans 523 residues: GMP synthase [glutamine-hydrolyzing] (523 aa).

Residues 18–208 (KILIVDFGGQ…LYNVCGAKGD (191 aa)) enclose the Glutamine amidotransferase type-1 domain. Cys-95 functions as the Nucleophile in the catalytic mechanism. Residues His-182 and Glu-184 contribute to the active site. In terms of domain architecture, GMPS ATP-PPase spans 209–398 (WNMKSFLAEA…LGLPDYLVHR (190 aa)). 236 to 242 (SGGVDSS) contacts ATP.

In terms of assembly, homodimer.

The catalysed reaction is XMP + L-glutamine + ATP + H2O = GMP + L-glutamate + AMP + diphosphate + 2 H(+). It participates in purine metabolism; GMP biosynthesis; GMP from XMP (L-Gln route): step 1/1. Its function is as follows. Catalyzes the synthesis of GMP from XMP. The polypeptide is GMP synthase [glutamine-hydrolyzing] (Treponema denticola (strain ATCC 35405 / DSM 14222 / CIP 103919 / JCM 8153 / KCTC 15104)).